Here is a 4561-residue protein sequence, read N- to C-terminus: MANVQVAVRVRPLSKRETKEGGRIIVEVDDKVAKIRNVKVDSRPESFGDTREKVVAFGFDYCYWSVNPEDPHYASQEVVFRDLGTEVLSGAAKGYNICLFAYGQTGSGKTYTMLGTPASVGLTPRICEGLFIREDDCASQPCSRSIKVSFLEIYNERVRDLLKQSNQNKSYTLRVREHPEMGPYVQGLSQHVVTNYQQVIQLLEAGIANRITAATHVHEASSRSHAIFTIHCTQAILQNNLPSETASKINLVDLAGSERADPSYCKDRITEGANINKSLVTLGIVISTLAQNSQVFSSCQSLSSAASSGGDSGVPSTTSGASSGGGPARRQSYIPYRDSVLTWLLKESLGGNSKTIMVATVSPAHTSYSETMSTMRYASNAKNIINKPRVNEDANVKLIRELREEIERLKAVLLNFELIDTLTQHWTEKRNDRQALMEHYGVDINRKRARVVIDSSLPHLMALEDDVLSTGVVLYHLKEGTTKIGRIDSDQEQDIVLQGQWIERDHCTITSTCGVVILRPTQGARCTVNGREVTASCRLTQGAVITLGKAQKFRFNHPAEAAVLRHQRLKVGEALGSSGSLEWLDLDGDVSASRLGLCPVLRKERRVLEEQCDRDQQPSRHSEIPYRAQPEQQQCHVEALKQQAKEGQSRVQKELELDHTHISQQIKDNQQWLLTEETWLASLRETQQEGNCGEEKELEASVAPDAWLPTVPQTPPSPLVQSQKRVVQPQCSPRHTTRATVWNIRQKKVSFQLERIIKKRRLLEAQRRLEQLSTFFWIQDDGASRAPSWASSSNTSGPGSQRRSRWTTCSSLSLQRLGCRRLPQLHSDFMNWDPSAMSPPVPELTHQMPEKTLSTDCIPPKAGRLGRNSFHSSRWRKFSPARRASTQGTHLTVSHKSVSSQEIESLGKQPCQMSSQGQSTKKQKARDGSRTFIPAAQTRWASVNTKTGWQKEGTCGTYKDPKETTSQSTDLSGLEPAAGHRKVVKTFQAESKPSPSSRASKKHQRVLAARARDIVKTFSRLPHGGPLKNQPRAGDPGTPASFTDSRPIKDPVREEDRDLSDTESSYSVDSLSYIYAKVPKKLLKPEDLQGKWNLPDSENSESDNSQISEDSLAGKGHKSLPENSRGEYSMKDHGHSRARTSASVRGLPMPSDSSLCTQKYRSFSLDSLIDPENRQGEPFLGSADEMPTETFWHLQNATPSSVDQEAMDRPSPTNHRMGVGVNVLLPKSNSFYLDPQFQPPCEQLESEMEASYSEHTNPLRGLQLARESPLLSVDSWFSCDSKVSPSSPSGDIHSLCPSPDIHEIQPHDEKPKHWLSIEEPKPPGTCKLPQSSTEPPCSSDLYATSASDTSKPSVCESQGLLQPGDGGFFQGREMPDMTNQGISEESHNSDMSSVLAPSATSFTQVCSVNKDWAALHQEYLLELSDSGFEAVGEPRPAFPFLEEDSSSLAEASDKVDTQLPTGPGLPRNLDFSSFPVHISKIGHLRAEKDHDSLSAKVESASDLLSTVERMSSNGTYPADIESLTSGSINAQPYTAGNVIPSSMTEAWEVHRASLEGCLQGDRHSVLITSSGQKRAYHNDDTLATEGDCLPQDGALLGKNTKVQPGLLSHNSYQQPLLEEKAASQQCTDGEVAGTRIDACCAFPSGPELFLHSTPWSSSPSSLQPPPLETFYVTKSRDALTETALEIPACREAWVPSPPPREAWGFDHSHQVSQKAHWKNNLPKLSQSQNSKIDSPQQTTTKRPTDLDTGEGTEELGKHSRNMREEENHDSAYSFVAQNRQHLPSTRLKVCECGNQLGILNKEYSLSVHQDEEGASAWHHGSVAFNGSEPKTLLFICDSKASGEEQSLLLPQIQSCGMHSQSPGARSDFIGKIANLDPEKVIPEEAAVSLKSRSLHCLSSPVIVAGGRSPTRRREGRNETGLLREVISKDIQEEFSLPGTQYICERCHLLLCSRERKPTECKAHGQSQEVQSKEEPLEEKQNKRVNNIDEMARLMRSVMQLETGILEIESKHNKHLHASHMPSTELMLQDLEDQEKADHVPTPESSGEHLCFEDQPSFPIQIKDDIFEDSKAREIEVTNATSNNNTQIQKLTGSPFRSREYVQTRESESEHSYPPPGADRLARDTCDSLGKGTALRKPSNISLHSRTMRGLARALPLQPSIERPKKDNELLKASAKFQGQTWALESLEELESMERFQESQIVVVPSGSELEDAKTQGGVEEMTVDRRGSLQEKEDMVSSTQKVPTPSQHWKGTFFSQEAVSPFYYQTGFSAALPHGELSGTQPVHSLSFPRSGLHGSDTKGVSSFEYILEPVMLKTNRNSLATGVGDQDHSGETRSSSPQERASGDVSTTHTPLGGSVMPVVVRASGQAVTSDSTLLNTEDWITVSTSSQEDQEGDFRDTSTGSTTQEALGSEAEATVQKERKNSSLDRISRQAEKRVSFLLQEDSNQGEEERQKAEETSEDQQLPNSAYLTPISELKGPDAEPLLLPDSSINASICLGILAEIRQAKTQRKQLTDLVAEGTVLPYETLQEAEWFSEAAGKPQTQKVKLGWGSTRNDAKAQRLHEASPSAVSADLLADERKAQVSAGSFHHLPNPETDRGPQHHLLASPHIVSELEKRYCTGKPRQFCGASGRSDSSEVIEKRKEASRTKSSVDPLPSDRLLSIPAVEQDGGLGSEKVSVLPSQTSYAPGRILHGQGQLTARETVKGLSFGGKDSILGHQEPRSLDSTHGGGSEKISVTTQKENAVFSECPSVICTVDNAVDLSQSKQDHVQGLDASTGLEETKASPKSGAVHPEAPGNVGAEANIRHPVKWKNVDSGLACGGDSKNPWSTPFLDQRPSLHPSGVREEAPGPCPKECLVFERNTGGSRPLGSSYEEAENRTIPCPHLSGSQPTTAVHACCSHSSTLLCCRDGVLRKGTPWAAAPPDHSLCIVPSTVCEVDGTGECLSRVSLAHDLKHKCGPVDNSIPNPPTTTPVSSPAQNCSCLSTSEMRARCLTHTFARGRSVEGSGEETTGKKVTTAPEDTFPSSPAGMSSEPLRTLKNNSVDENGQASQTMPEPPAVTQGPGTLNSNECVDSKLVIAAQFGHLENTKCCSEKMQPSTKVRGHSCLAPQARFVDMLKPTCHPKIETSWEEEEQQRDQVSGDGKDHAQVRNLVPSNVGGFDGYQTRDGETKSSVPQTFFSDFEAQTEPSQPAAQTHSQHCSDREQLPRSHRHLLPVIAIFSGPKHARYSPRPQFTVVSSSRSLQELNLSVEPPSPTDEDAQRPDSSWRPHLRGYSSEKPISTSLKTQDCSQKALCNLNNSSSNHRPLNPVIPPYPTSSTVSCMPTPEFMTTWMPGALEQAHQGKTDKLSVQGMPENWHSQTDEEMLHFGSSELSPSVLSSCPQGLVHIGWKQYVFGSAVDVSCSQKPQCLIQSNMAQCSSIDNVLEDKKSPFHSHPKTDAQTQDLPNIHSDVENDQSSNELPLVGGSATAQVDEILLLCPPEMGCAGGEASVNTFEQGTQALGSRRHWCCTDVSLQPEARTMSDSELASWTSMHNLSVHLSQLLHSTSELLGSLSHPGVVIKEQNVKRDSLDEAQQALRMDGSASTTVDEGIQTDLALPPLAFQGPEVKSEEVSVILDMMDSGITTVAQEKGDVPVVFQKREAEGAAETPGLHEESTHNKLQSPPLPSPHLRVQKADLGQNFTFMSPPASPDGSPPPSLRPEESCMVVNMPRFSPHSGLSLGAFESTQEPRTQKRLCGSRAVLVDRASSPILTFSASIQELSNPLACVTLSAPSVHPLEDFQKLDDINSDLAVGDPRPPVDNSQATDESGDSQRAESLDREGKSPLGKSSERLLLDNSSSCSPQQSSSLQVSFLGIAPQQLQPKTTTGDQSKLPSPPPRHKNPKLDDSCVSEKVTSVEHGPLRPSQWQGRTTNKDWGSEFMVEPQPNLDQPSSRRGLQPLSPCQISDTTGLQSPAVDPPQACHPVGLLCSGSHMHVAPGPQHYNLRDLPVHNNFNNLYGVQGGPGRGLHEGESLGVRCDSSSVGTHRPPQLSDKYSQNLEWLRLEHIPLQAGVQKLALSVELTEAKLHHGFGETDALLKVLQSGTGEVLAPQEPAVPSSEEFYTRQKKTIETLRRQRAERLHNFRRTRSLSPQKQLGLLPSKDLPTWELDLPSRRQEYLQQLRKHIVDTTRIPEPAPGLARPPSDIELMLQEYRRAREEAKVEIAQARDRLKERTEQEKMRIRQQIISQLLKEEEKLQTLANFSSLYTSSNGSISSGVTSGYNSSPAFSGHLQSLEVSGDSQVPDSQDTWIGDWQDQSTVRNSYLYLTGSSWKSLAHSRRASMGSGCCSASSLSSLGACFSFPYQDLAKHIVSTSMADVMAACSDNLHNLFIRQATDGWNYQGEEQEVQLYYKEFSSTRHGFLGASVVSQPLSQVWAAVSDPTLWPLYHKPIQTARLHQRVTNSISLVYLVCNTTLCELKQLRDFCCVCVEAKEGCLSIMAAQSVYDASMPRPSRKMVRGEILPSAWVLQPVIIEGKEITRVISLVQVELGAPGFPPHLLNSCIKQQPLVVAKLASFLRS.

One can recognise a Kinesin motor domain in the interval 3 to 384 (NVQVAVRVRP…MRYASNAKNI (382 aa)). ATP is bound at residue 103-110 (GQTGSGKT). A compositionally biased stretch (low complexity) spans 307 to 321 (SSGGDSGVPSTTSGA). The tract at residues 307-330 (SSGGDSGVPSTTSGASSGGGPARR) is disordered. The FHA domain occupies 482 to 533 (TKIGRIDSDQEQDIVLQGQWIERDHCTITSTCGVVILRPTQGARCTVNGREV). Disordered stretches follow at residues 784 to 805 (SRAPSWASSSNTSGPGSQRRSR), 873 to 1064 (SRWR…DTES), and 1092 to 1153 (WNLP…PSDS). Composition is skewed to polar residues over residues 789-805 (WASSSNTSGPGSQRRSR), 884-903 (ASTQGTHLTVSHKSVSSQEI), 911-920 (CQMSSQGQST), and 939-948 (RWASVNTKTG). 2 stretches are compositionally biased toward basic and acidic residues: residues 1046 to 1060 (RPIKDPVREEDRDLS) and 1124 to 1135 (SRGEYSMKDHGH). At Ser1164 the chain carries Phosphoserine. Disordered regions lie at residues 1288–1392 (PSGD…SDMS), 1700–1767 (REAW…EEEN), 1959–1980 (ECKAHGQSQEVQSKEEPLEEKQ), 2077–2120 (TNAT…ADRL), 2320–2356 (LATGVGDQDHSGETRSSSPQERASGDVSTTHTPLGGS), 2384–2427 (VSTS…SSLD), 2439–2467 (FLLQEDSNQGEEERQKAEETSEDQQLPNS), 2622–2656 (KPRQFCGASGRSDSSEVIEKRKEASRTKSSVDPLP), 2712–2735 (KDSILGHQEPRSLDSTHGGGSEKI), 2777–2800 (TGLEETKASPKSGAVHPEAPGNVG), 3002–3067 (RSVE…PGTL), 3185–3207 (AQTEPSQPAAQTHSQHCSDREQL), 3246–3286 (ELNL…TSLK), 3645–3703 (EGAA…LRPE), 3790–3847 (SDLA…PQQS), and 3863–3913 (QPKT…GRTT). Residues 1300–1321 (DIHEIQPHDEKPKHWLSIEEPK) are compositionally biased toward basic and acidic residues. 2 stretches are compositionally biased toward polar residues: residues 1328-1360 (LPQSSTEPPCSSDLYATSASDTSKPSVCESQGL) and 1722-1741 (PKLSQSQNSKIDSPQQTTTK). 2 stretches are compositionally biased toward basic and acidic residues: residues 1754–1767 (ELGKHSRNMREEEN) and 1970–1980 (QSKEEPLEEKQ). Residues 2077–2091 (TNATSNNNTQIQKLT) show a composition bias toward polar residues. Over residues 2096 to 2110 (RSREYVQTRESESEH) the composition is skewed to basic and acidic residues. Composition is skewed to polar residues over residues 2333 to 2351 (TRSSSPQERASGDVSTTHT) and 2399 to 2408 (TSTGSTTQEA). Positions 2414-2463 (EATVQKERKNSSLDRISRQAEKRVSFLLQEDSNQGEEERQKAEETSEDQQ) form a coiled coil. Residues 2417–2427 (VQKERKNSSLD) show a composition bias toward basic and acidic residues. A compositionally biased stretch (basic and acidic residues) spans 2634 to 2647 (DSSEVIEKRKEASR). 2 stretches are compositionally biased toward polar residues: residues 3039–3054 (LKNNSVDENGQASQTM) and 3187–3199 (TEPSQPAAQTHSQ). Positions 3689–3700 (PASPDGSPPPSL) are enriched in pro residues. Over residues 3812–3835 (DSQRAESLDREGKSPLGKSSERLL) the composition is skewed to basic and acidic residues. Over residues 3863 to 3874 (QPKTTTGDQSKL) the composition is skewed to polar residues. Positions 4185 to 4224 (SDIELMLQEYRRAREEAKVEIAQARDRLKERTEQEKMRIR) form a coiled coil. Positions 4344–4561 (PYQDLAKHIV…VAKLASFLRS (218 aa)) constitute an START domain.

The protein belongs to the TRAFAC class myosin-kinesin ATPase superfamily. Kinesin family. As to quaternary structure, interacts with ATAD3A.

Its subcellular location is the cytoplasm. It is found in the cytoskeleton. It localises to the microtubule organizing center. The protein localises to the centrosome. The protein resides in the centriole. Its subcellular location is the nucleus. Microtubule-dependent motor protein required for spindle pole assembly during mitosis. Required to stabilize the pericentriolar material (PCM). This is StAR-related lipid transfer protein 9 (Stard9) from Mus musculus (Mouse).